Reading from the N-terminus, the 214-residue chain is Acyl-homoserine-lactone synthase (214 aa).

This sequence belongs to the autoinducer synthase family.

The enzyme catalyses a fatty acyl-[ACP] + S-adenosyl-L-methionine = an N-acyl-L-homoserine lactone + S-methyl-5'-thioadenosine + holo-[ACP] + H(+). In terms of biological role, required for the synthesis of autoinducer molecules such as OHHL (N-(3-oxohexanoyl)-L-homoserine lactone), and HHL (N-hexanoyl-L-homoserine lactone). In Yersinia enterocolitica, this protein is Acyl-homoserine-lactone synthase (yenI).